The chain runs to 614 residues: Glucosidase 2 subunit beta (614 aa).

The first 20 residues, 1–20 (MGLHTLLLLLLLRISASAAA), serve as a signal peptide directing secretion. The N-linked (GlcNAc...) asparagine glycan is linked to Asn115. Basic and acidic residues-rich tracts occupy residues 194-222 (EEER…KKAS), 231-272 (QENH…HDPE), and 324-351 (TGEK…HSEE). The segment at 194–396 (EEERLRKEKE…SHESDDEYVD (203 aa)) is disordered. Residues 352-364 (THEDESDVPESAE) show a composition bias toward acidic residues. Residues 372–382 (SEVEDDRHKYD) show a composition bias toward basic and acidic residues. Over residues 383–396 (DEDFSHESDDEYVD) the composition is skewed to acidic residues. An MRH domain is found at 497–592 (DQCFESKEGK…VLSTPALCDE (96 aa)). 3 disulfide bridges follow: Cys499–Cys512, Cys549–Cys578, and Cys563–Cys590.

Heterodimer of a catalytic alpha subunit and a beta subunit.

It is found in the endoplasmic reticulum. It participates in glycan metabolism; N-glycan metabolism. Its function is as follows. Regulatory subunit of glucosidase II. May be required for defense response elicited by pathogen-associated molecular patterns (PAMPs). The sequence is that of Glucosidase 2 subunit beta from Oryza sativa subsp. indica (Rice).